The sequence spans 454 residues: Argininosuccinate lyase (454 aa).

It belongs to the lyase 1 family. Argininosuccinate lyase subfamily.

It localises to the cytoplasm. The enzyme catalyses 2-(N(omega)-L-arginino)succinate = fumarate + L-arginine. The protein operates within amino-acid biosynthesis; L-arginine biosynthesis; L-arginine from L-ornithine and carbamoyl phosphate: step 3/3. The protein is Argininosuccinate lyase of Herpetosiphon aurantiacus (strain ATCC 23779 / DSM 785 / 114-95).